A 153-amino-acid polypeptide reads, in one-letter code: Ribosomal RNA large subunit methyltransferase H (153 aa).

2 residues coordinate S-adenosyl-L-methionine: Leu-71 and Gly-102.

This sequence belongs to the RNA methyltransferase RlmH family. As to quaternary structure, homodimer.

The protein resides in the cytoplasm. It carries out the reaction pseudouridine(1915) in 23S rRNA + S-adenosyl-L-methionine = N(3)-methylpseudouridine(1915) in 23S rRNA + S-adenosyl-L-homocysteine + H(+). Its function is as follows. Specifically methylates the pseudouridine at position 1915 (m3Psi1915) in 23S rRNA. This is Ribosomal RNA large subunit methyltransferase H from Anaeromyxobacter sp. (strain K).